The sequence spans 71 residues: Conotoxin ba5b (71 aa).

Residues 1-19 (MLCLPVFITLLLLVSPSAA) form the signal peptide. The propeptide occupies 20–52 (LPVESELQRDLTQDSPKDFRIREPLLLSKMFDR). Disulfide bonds link Cys-54/Cys-63 and Cys-55/Cys-64. Residue Cys-64 is modified to Cysteine amide. The propeptide occupies 66 to 71 (RYQRGS).

The protein belongs to the conotoxin T superfamily. In terms of tissue distribution, expressed by the venom duct.

It is found in the secreted. This chain is Conotoxin ba5b, found in Conus bayani (Bayan's cone).